The chain runs to 711 residues: Polyribonucleotide nucleotidyltransferase (711 aa).

Asp-486 and Asp-492 together coordinate Mg(2+). A KH domain is found at Pro-553 to Ile-612. Residues Gly-622 to Lys-690 enclose the S1 motif domain. The segment at Ile-689 to Glu-711 is disordered. The segment covering Glu-694–Glu-711 has biased composition (low complexity).

The protein belongs to the polyribonucleotide nucleotidyltransferase family. Component of the RNA degradosome, which is a multiprotein complex involved in RNA processing and mRNA degradation. Requires Mg(2+) as cofactor.

The protein localises to the cytoplasm. The catalysed reaction is RNA(n+1) + phosphate = RNA(n) + a ribonucleoside 5'-diphosphate. Functionally, involved in mRNA degradation. Catalyzes the phosphorolysis of single-stranded polyribonucleotides processively in the 3'- to 5'-direction. The polypeptide is Polyribonucleotide nucleotidyltransferase (Escherichia coli (strain SE11)).